Reading from the N-terminus, the 143-residue chain is MAPKKKVTGLIKLQIKAGAANPAPPIGPALGQHGVNIMEFCKAYNAQTESQRGNVIPVEITVYEDRTFTFILKTPPAAELIKKAAGVAKGSGTPHTVKVAKLTMDQVREIAEQKQADLNANDIDAAAKIIAGTARSMGITVEA.

The protein belongs to the universal ribosomal protein uL11 family. In terms of assembly, part of the ribosomal stalk of the 50S ribosomal subunit. Interacts with L10 and the large rRNA to form the base of the stalk. L10 forms an elongated spine to which L12 dimers bind in a sequential fashion forming a multimeric L10(L12)X complex. In terms of processing, one or more lysine residues are methylated.

Its function is as follows. Forms part of the ribosomal stalk which helps the ribosome interact with GTP-bound translation factors. In Clavibacter sepedonicus (Clavibacter michiganensis subsp. sepedonicus), this protein is Large ribosomal subunit protein uL11.